The sequence spans 340 residues: Erythroferrone (340 aa).

The N-terminal stretch at 1–24 (MASTRRPVGARTLLACASLLAAMG) is a signal peptide. 3 disordered regions span residues 30-63 (SAEPVGTHARPQPPGAELPAPPANSPPEPTIAHA), 79-112 (SDKGINSKRRSKARRLKLGLPGPPGPPGPQGPPG), and 141-161 (HCTRDLTTPASGSPSRVPAAQ). Residues 40 to 58 (PQPPGAELPAPPANSPPEP) show a composition bias toward pro residues. Residues 84–95 (NSKRRSKARRLK) show a composition bias toward basic residues. Residues proline 99, proline 101, proline 102, proline 104, proline 105, and proline 107 each carry the hydroxyproline modification. Residues 99–112 (PGPPGPPGPQGPPG) are compositionally biased toward pro residues. The segment covering 145–154 (DLTTPASGSP) has biased composition (polar residues). Residues 185 to 340 (APRVEAAFHC…SHFSAILLGL (156 aa)) enclose the C1q domain. N-linked (GlcNAc...) asparagine glycans are attached at residues asparagine 229, asparagine 281, asparagine 292, and asparagine 319.

Belongs to the adipolin/erythroferrone family. In terms of assembly, homodimer; disulfide-linked. Forms trimer, hexamers and higher molecular weight oligomers. May form heteromeric complexes with C1QTNF2 and C1QTNF12 and, to a lesser extent, with C1QTNF5 and C1QTNF10. Interacts with BMP5 and BMP7; the interaction inhibits BMP-induced transcription of HAMP. Interacts with BMP6; the interaction inhibits BMP-induced transcription of HAMP. Interacts with BMP2. Interacts with heterodimers composed of BMP2 and BMP6 in vitro, the interaction inhibits the heterodimer binding to its receptor BMPR1A /ALK3 and thereby suppresses expression of HAMP. N-glycosylated; required for secretion of the mature protein. In terms of tissue distribution, expressed in the soleus muscle in the leg (at protein level). Found in blood (at protein level). Weakly expressed in the heart (at protein level). Predominantly expressed in skeletal muscle and, at much lower levels, in other tissues, including lung, eye, smooth muscle, brain and kidney. Within skeletal muscles, higher expression levels in soleus as compared with plantaris. Expressed in osteoblasts, mature osteoclasts and erythroblasts. When fasting, females tend to have higher circulating levels than males. Obese mice tend to have lower expression and circulating levels as compared to lean animals. Following EPO treatment, only expressed in bone marrow and spleen.

It localises to the secreted. In terms of biological role, iron-regulatory hormone that acts as an erythroid regulator after hemorrhage: produced by erythroblasts following blood loss and mediates suppression of hepcidin (HAMP) expression in the liver, thereby promoting increased iron absorption and mobilization from stores. Promotes lipid uptake into adipocytes and hepatocytes via transcriptional up-regulation of genes involved in fatty acid uptake. Inhibits apoptosis and inflammatory response in cardiomyocytes via promotion of sphingosine-1-phosphate (S1P) and cAMP-dependent activation of AKT signaling. Inhibits autophagy induced by nutrient deficiency in hepatocytes via promoting the phosphorylation of IRS1, AKT, and MTOR, and thereby subsequent activation of the AKT-MTOR signaling pathway. Negatively regulates the differentiation of osteoblasts, potentially via sequestering BMP2, and thereby inhibits the activation of SMAD signaling. The reduction in BMP2 signaling in osteoblasts also results in an increase in expression of the osteoclastogenesis-promoting factors TNFSF11/RANKL and SOST, thereby indirectly promotes bone resorption. The polypeptide is Erythroferrone (Mus musculus (Mouse)).